Here is a 111-residue protein sequence, read N- to C-terminus: Elevenin (111 aa).

Positions 1–24 are cleaved as a signal peptide; it reads MAPSQKALLVLVLSMLLTASDSRA. C29 and C38 are joined by a disulfide. Positions 44 to 111 are excised as a propeptide; the sequence is KRGGDSLSVG…TEQLDRLLTL (68 aa).

It belongs to the elevenin family. As to quaternary structure, monomer. As to expression, expressed by the venom duct.

The protein resides in the secreted. Functionally, may mimic the function of prey elevenin neuropeptide. In vivo, intracranial injection in mice induces hyperactivity. The polypeptide is Elevenin (Conus ebraeus (Hebrew cone)).